Consider the following 325-residue polypeptide: MASSSPCQIFLVFVMVTLVTSLIPSNALLTPHFYDNVCPQALPTIKSVVLHAILREKRIGASLLRLHFHDCFVNGCDGSVLLDDTPNFTGEKTALPNINSIRGFSVVDEIKAAVDKVCKGPVVSCADILATAARDSVAILGGPQFFYNVLLGRRDARTASKAAANANLPSPTFNFSQLISNFKSQGLNVKDLVALSGGHTIGFARCTTFRNRIYNETNIDPIFAASLRKTCPRNGGDNNLTPLDFTPTRVENTYYRDLLYKRGVLHSDQQLFKGQGSESDKLVQLYSKNTFAFASDFKTSLIKMGNIKPLTGRQGEIRLNCRRVR.

The N-terminal stretch at 1–21 is a signal peptide; the sequence is MASSSPCQIFLVFVMVTLVTS. 4 disulfides stabilise this stretch: cysteine 38-cysteine 118, cysteine 71-cysteine 76, cysteine 125-cysteine 321, and cysteine 206-cysteine 231. Histidine 69 functions as the Proton acceptor in the catalytic mechanism. Residues aspartate 70, valine 73, glycine 75, aspartate 77, and serine 79 each coordinate Ca(2+). Asparagine 87 carries an N-linked (GlcNAc...) asparagine glycan. Proline 169 contacts substrate. Asparagine 174 carries N-linked (GlcNAc...) asparagine glycosylation. Histidine 199 is a binding site for heme b. Threonine 200 contacts Ca(2+). Asparagine 215 carries N-linked (GlcNAc...) asparagine glycosylation. Aspartate 244, threonine 246, and glutamate 251 together coordinate Ca(2+).

This sequence belongs to the peroxidase family. Classical plant (class III) peroxidase subfamily. Heme b serves as cofactor. Requires Ca(2+) as cofactor. As to expression, expressed in the differentiating root epidermis following inoculation with the bacterial symbiont Sinorhizobium meliloti.

Its subcellular location is the secreted. It carries out the reaction 2 a phenolic donor + H2O2 = 2 a phenolic radical donor + 2 H2O. In terms of biological role, removal of H(2)O(2), oxidation of toxic reductants, biosynthesis and degradation of lignin, suberization, auxin catabolism, response to environmental stresses such as wounding, pathogen attack and oxidative stress. These functions might be dependent on each isozyme/isoform in each plant tissue. This chain is Peroxidase RIP1, found in Medicago truncatula (Barrel medic).